A 414-amino-acid polypeptide reads, in one-letter code: Zinc metalloproteinase-disintegrin-like batroxstatin-3 (414 aa).

Asn-7 and Asn-70 each carry an N-linked (GlcNAc...) asparagine glycan. Residues 10–204 (KYIKLVIVAD…HTPQCILNEP (195 aa)) form the Peptidase M12B domain. 3 disulfide bridges follow: Cys-121/Cys-199, Cys-161/Cys-183, and Cys-163/Cys-168. His-146 serves as a coordination point for Zn(2+). Glu-147 is a catalytic residue. 2 residues coordinate Zn(2+): His-150 and His-156. Residues 212–298 (PEVCGNYLLE…HCPTDRFHRN (87 aa)) form the Disintegrin domain. Ca(2+) is bound by residues Val-214, Asn-217, Glu-221, Glu-224, and Asp-227. Disulfide bonds link Cys-215-Cys-244, Cys-226-Cys-239, Cys-228-Cys-234, Cys-238-Cys-261, Cys-252-Cys-258, Cys-257-Cys-283, Cys-270-Cys-290, Cys-277-Cys-309, Cys-302-Cys-314, Cys-321-Cys-371, Cys-336-Cys-381, Cys-349-Cys-359, Cys-366-Cys-403, and Cys-397-Cys-408. The D/ECD-tripeptide signature appears at 276 to 278 (ECD). Ca(2+) is bound by residues Asp-278, Glu-281, Asp-293, and Arg-294.

Belongs to the venom metalloproteinase (M12B) family. P-III subfamily. P-IIIa sub-subfamily. As to quaternary structure, monomer. Zn(2+) serves as cofactor. In terms of tissue distribution, expressed by the venom gland.

It localises to the secreted. Its function is as follows. Snake venom zinc metalloprotease that induces apoptosis in vascular endothelial cells (VEC), without degrading the extracellular matrix (it cannot cleave collagen) or inhibiting adhesion of VEC. Has also fibrinogenolytic and hemorrhagic activities. This chain is Zinc metalloproteinase-disintegrin-like batroxstatin-3, found in Bothrops atrox (Barba amarilla).